Here is a 61-residue protein sequence, read N- to C-terminus: DNA-directed RNA polymerase subunit Rpo6 (61 aa).

It belongs to the archaeal Rpo6/eukaryotic RPB6 RNA polymerase subunit family. As to quaternary structure, part of the RNA polymerase complex.

The protein resides in the cytoplasm. It carries out the reaction RNA(n) + a ribonucleoside 5'-triphosphate = RNA(n+1) + diphosphate. Functionally, DNA-dependent RNA polymerase (RNAP) catalyzes the transcription of DNA into RNA using the four ribonucleoside triphosphates as substrates. This chain is DNA-directed RNA polymerase subunit Rpo6, found in Thermoplasma acidophilum (strain ATCC 25905 / DSM 1728 / JCM 9062 / NBRC 15155 / AMRC-C165).